The sequence spans 333 residues: Glyceraldehyde-3-phosphate dehydrogenase (333 aa).

An N-acetylserine modification is found at S1. NAD(+)-binding positions include 10–11 (RI), D31, and M76. Residues 147-149 (SCT), T178, 207-208 (TG), and R230 each bind D-glyceraldehyde 3-phosphate. C148 (nucleophile) is an active-site residue. Residue N312 coordinates NAD(+).

This sequence belongs to the glyceraldehyde-3-phosphate dehydrogenase family. As to quaternary structure, homotetramer.

It is found in the cytoplasm. It catalyses the reaction D-glyceraldehyde 3-phosphate + phosphate + NAD(+) = (2R)-3-phospho-glyceroyl phosphate + NADH + H(+). It participates in carbohydrate degradation; glycolysis; pyruvate from D-glyceraldehyde 3-phosphate: step 1/5. The sequence is that of Glyceraldehyde-3-phosphate dehydrogenase from Panulirus versicolor (Painted spiny lobster).